The following is a 284-amino-acid chain: Nucleoid occlusion protein (284 aa).

The segment at residues 143-162 (EALAQRVGKSQSAIANKMRL) is a DNA-binding region (H-T-H motif).

This sequence belongs to the ParB family.

It localises to the cytoplasm. Its subcellular location is the nucleoid. Functionally, effects nucleoid occlusion by binding relatively nonspecifically to DNA and preventing the assembly of the division machinery in the vicinity of the nucleoid, especially under conditions that disturb the cell cycle. It helps to coordinate cell division and chromosome segregation by preventing the formation of the Z ring through the nucleoid, which would cause chromosome breakage. The protein is Nucleoid occlusion protein of Listeria monocytogenes serovar 1/2a (strain ATCC BAA-679 / EGD-e).